The sequence spans 229 residues: NAD-dependent protein deacetylase (229 aa).

The Deacetylase sirtuin-type domain maps to 1–229 (MNKLNEALKK…SDAVKVFEEI (229 aa)). Alanine 20, arginine 32, glutamine 96, isoleucine 98, aspartate 99, histidine 114, threonine 181, serine 182, asparagine 205, and valine 223 together coordinate NAD(+). Nicotinamide is bound by residues isoleucine 98 and aspartate 99. The Proton acceptor role is filled by histidine 114.

This sequence belongs to the sirtuin family. Class U subfamily.

The protein localises to the cytoplasm. It catalyses the reaction N(6)-acetyl-L-lysyl-[protein] + NAD(+) + H2O = 2''-O-acetyl-ADP-D-ribose + nicotinamide + L-lysyl-[protein]. NAD-dependent protein deacetylase which modulates the activities of several enzymes which are inactive in their acetylated form. The sequence is that of NAD-dependent protein deacetylase from Listeria monocytogenes serovar 1/2a (strain ATCC BAA-679 / EGD-e).